Reading from the N-terminus, the 299-residue chain is AT-hook motif nuclear-localized protein 25 (299 aa).

Disordered regions lie at residues 1 to 87 (MSSY…RDSP) and 216 to 251 (EEET…CESN). 2 stretches are compositionally biased toward basic and acidic residues: residues 14 to 23 (HLQRPEDSRT) and 33 to 42 (NRSEADEAKA). Low complexity-rich tracts occupy residues 44–72 (TTPT…PAGS) and 224–239 (TTGV…QSSE). The a.T hook DNA-binding region spans 63–75 (RRPRGRPAGSKNK). Residues 87–233 (PNVLRSHVLE…TTGVQQQQPE (147 aa)) form the PPC domain. A compositionally biased stretch (polar residues) spans 240–251 (VTGSGAQACESN).

In terms of assembly, homodimer. Interacts with AHL27 and AHL29. In terms of tissue distribution, expressed in seedlings, leaves, stems, floral tips and flowers.

It is found in the nucleus. Its function is as follows. Transcription factor that specifically binds AT-rich DNA sequences related to the nuclear matrix attachment regions (MARs). Binds the DNA sequence GNFEI (GA-negative feedback element I) in the GA3OX1 promoter. Binding to GNFEI sequence is required for GA-negative feedback regulation of GA3OX1. This is AT-hook motif nuclear-localized protein 25 from Arabidopsis thaliana (Mouse-ear cress).